The chain runs to 522 residues: DNA primase DnaG (522 aa).

Residues 171–257 enclose the Toprim domain; the sequence is DAIIILEGRA…CVEDLVQKEI (87 aa). Residues Glu177, Asp219, and Asp221 each contribute to the Mg(2+) site.

This sequence belongs to the archaeal DnaG primase family. In terms of assembly, forms a ternary complex with MCM helicase and DNA. Component of the archaeal exosome complex. Requires Mg(2+) as cofactor.

The enzyme catalyses ssDNA + n NTP = ssDNA/pppN(pN)n-1 hybrid + (n-1) diphosphate.. Its function is as follows. RNA polymerase that catalyzes the synthesis of short RNA molecules used as primers for DNA polymerase during DNA replication. Also part of the exosome, which is a complex involved in RNA degradation. Acts as a poly(A)-binding protein that enhances the interaction between heteromeric, adenine-rich transcripts and the exosome. In Methanosarcina mazei (strain ATCC BAA-159 / DSM 3647 / Goe1 / Go1 / JCM 11833 / OCM 88) (Methanosarcina frisia), this protein is DNA primase DnaG.